We begin with the raw amino-acid sequence, 129 residues long: Follitropin subunit beta (129 aa).

A signal peptide spans 1–18 (MKSVQFCFLFCCWRATCC). Disulfide bonds link Cys21/Cys69, Cys35/Cys84, Cys38/Cys122, Cys46/Cys100, Cys50/Cys102, and Cys105/Cys112. Asn25 and Asn42 each carry an N-linked (GlcNAc...) asparagine glycan.

Belongs to the glycoprotein hormones subunit beta family. As to quaternary structure, heterodimer. The active follitropin is a heterodimer composed of an alpha chain/CGA shared with other hormones and a unique beta chain/FSHB shown here.

Its subcellular location is the secreted. Together with the alpha chain CGA constitutes follitropin, the follicle-stimulating hormone, and provides its biological specificity to the hormone heterodimer. Binds FSHR, a G protein-coupled receptor, on target cells to activate downstream signaling pathways. Follitropin is involved in follicle development and spermatogenesis in reproductive organs. The protein is Follitropin subunit beta (FSHB) of Cervus nippon (Sika deer).